We begin with the raw amino-acid sequence, 393 residues long: Cholinephosphotransferase 1 (393 aa).

Topologically, residues 1–40 (MGFFIPQSSLGNLKLYKYQSDDRSFLSNHVLRPFWRKFAT) are lumenal. A helical membrane pass occupies residues 41-61 (IFPLWMAPNLVTLLGFCFIIF). The Cytoplasmic segment spans residues 62–172 (NVLTTLYYDP…YHTHKLYLAE (111 aa)). Residues 173–193 (FCGPVEGIIVLCISFIAVGIY) form a helical membrane-spanning segment. Residues 194-210 (GPQTIWHTKVAQFSWQD) lie on the Lumenal side of the membrane. The helical transmembrane segment at 211–231 (FVFDVETVHLMYAFCTGALIF) threads the bilayer. Residues 232 to 263 (NIVTAHTNVVRYYESQSTKSATPSKTAENISK) are Cytoplasmic-facing. The chain crosses the membrane as a helical span at residues 264 to 284 (AVNGLLPFFAYFSSIFTLVLI). A topological domain (lumenal) is located at residue Q285. Residues 286 to 306 (PSFISLALILSIGFSVAFVVG) traverse the membrane as a helical segment. Topologically, residues 307–320 (RMIIAHLTMQPFPM) are cytoplasmic. A helical transmembrane segment spans residues 321–341 (VNFPFLIPTIQLVLYAFMVYV). The Lumenal segment spans residues 342 to 348 (LDYQKGS). Residues 349-369 (IVSALVWMGLGLTLAIHGMFI) form a helical membrane-spanning segment. The Cytoplasmic portion of the chain corresponds to 370–393 (NDIIYDITTFLDIYALSIKHPKEI).

It belongs to the CDP-alcohol phosphatidyltransferase class-I family. Mg(2+) serves as cofactor.

It localises to the microsome membrane. The protein localises to the endoplasmic reticulum membrane. The protein resides in the mitochondrion outer membrane. It carries out the reaction CDP-choline + a 1,2-diacyl-sn-glycerol = a 1,2-diacyl-sn-glycero-3-phosphocholine + CMP + H(+). It catalyses the reaction CDP-N,N-dimethylethanolamine + a 1,2-diacyl-sn-glycerol = a 1,2-diacyl-sn-glycero-3-phospho-N,N-dimethylethanolamine + CMP + H(+). It functions in the pathway phospholipid metabolism; phosphatidylcholine biosynthesis; phosphatidylcholine from phosphocholine: step 2/2. Its activity is regulated as follows. Requires a divalent cation activator, and is inhibited by CMP. Activated by phospholipids, especially phosphatidylcholine. Its function is as follows. Catalyzes the final step in the CDP-choline route leading to phosphatidylcholin (PC). Preferentially uses CDP-monomethylethanolamine as aminoalcohol substrate. Shows highest activity toward di- and mono-unsaturated diacylglycerol species as lipid substrates. The CDP-choline pathway only contributes to net PC synthesis if exogenous choline is present. In its absence, this pathway recycles choline from PC turnover and may contribute to maintaining the proper PC species composition. This chain is Cholinephosphotransferase 1 (CPT1), found in Saccharomyces cerevisiae (strain ATCC 204508 / S288c) (Baker's yeast).